The following is a 97-amino-acid chain: U-reduvitoxin-Pr10a (97 aa).

A signal peptide spans 1-18; sequence MKTALFLVFALAFIAVEG. Pacifastin domains follow at residues 22–59 and 62–97; these read KACSKPGQTVLAPDGCNHCRCSKNGIIMGCTKKMCPPR and KQSCKPGATFKHKDGCNTCKCSDDGKSARCTARLCW. 3 disulfides stabilise this stretch: C24-C42, C37-C56, and C40-C51. Residues 57–59 form a pro-Pro-Arg motif necessary for proteolytic processing region; that stretch reads PPR. 3 disulfide bridges follow: C65–C82, C77–C96, and C80–C91.

It belongs to the protease inhibitor I19 family. In terms of tissue distribution, expressed by the venom gland.

The protein localises to the secreted. Inhibits trypsin activity and prophenoloxidase (PPO) activation, an enzyme essential for both clotting and insect innate immune responses. It does not inhibit activity of chymotrypsin and protease K, and has no effect on phenoloxidase (PO) activity. This is U-reduvitoxin-Pr10a from Platymeris rhadamanthus (Red spot assassin bug).